A 271-amino-acid chain; its full sequence is MSDMRLIVAGAGGRMGRALTRAISETKGVVLTGALEAPGSELLGQDAGVLAGLPANGVELSADLWTLSANADGILDFTVPGATIANVAIAAQRGIVHVIGTTGLSSSDNAVIQSVTRQAIVVKSGNMSLGVNLLAALTKRVAQSLGDNFDIEIVEMHHRAKIDAPSGTALLLGEAAALGRGVDLDSHSARGRDGLTGARKTGDIGFASLRGGTVTGDHSVIFAGPYERIELAHKAEDRMIFAHGALKAAQWAHGKKPGLYSMMDVLGLAEF.

Residues 10 to 15, Glu36, 100 to 102, and 124 to 127 contribute to the NAD(+) site; these read GAGGRM, GTT, and SGNM. The active-site Proton donor/acceptor is the His157. His158 is a binding site for (S)-2,3,4,5-tetrahydrodipicolinate. The Proton donor role is filled by Lys161. (S)-2,3,4,5-tetrahydrodipicolinate is bound at residue 167 to 168; sequence GT.

This sequence belongs to the DapB family.

It is found in the cytoplasm. The enzyme catalyses (S)-2,3,4,5-tetrahydrodipicolinate + NAD(+) + H2O = (2S,4S)-4-hydroxy-2,3,4,5-tetrahydrodipicolinate + NADH + H(+). The catalysed reaction is (S)-2,3,4,5-tetrahydrodipicolinate + NADP(+) + H2O = (2S,4S)-4-hydroxy-2,3,4,5-tetrahydrodipicolinate + NADPH + H(+). It functions in the pathway amino-acid biosynthesis; L-lysine biosynthesis via DAP pathway; (S)-tetrahydrodipicolinate from L-aspartate: step 4/4. In terms of biological role, catalyzes the conversion of 4-hydroxy-tetrahydrodipicolinate (HTPA) to tetrahydrodipicolinate. This is 4-hydroxy-tetrahydrodipicolinate reductase from Rhodopseudomonas palustris (strain HaA2).